A 200-amino-acid polypeptide reads, in one-letter code: Oligoribonuclease (200 aa).

Positions 5 to 169 (MVWIDCEMTG…ADIRESIAEL (165 aa)) constitute an Exonuclease domain. Tyrosine 126 is a catalytic residue.

This sequence belongs to the oligoribonuclease family.

Its subcellular location is the cytoplasm. In terms of biological role, 3'-to-5' exoribonuclease specific for small oligoribonucleotides. The polypeptide is Oligoribonuclease (Streptomyces avermitilis (strain ATCC 31267 / DSM 46492 / JCM 5070 / NBRC 14893 / NCIMB 12804 / NRRL 8165 / MA-4680)).